Reading from the N-terminus, the 949-residue chain is Glycine dehydrogenase (decarboxylating) (949 aa).

At lysine 697 the chain carries N6-(pyridoxal phosphate)lysine.

It belongs to the GcvP family. As to quaternary structure, the glycine cleavage system is composed of four proteins: P, T, L and H. Pyridoxal 5'-phosphate serves as cofactor.

It carries out the reaction N(6)-[(R)-lipoyl]-L-lysyl-[glycine-cleavage complex H protein] + glycine + H(+) = N(6)-[(R)-S(8)-aminomethyldihydrolipoyl]-L-lysyl-[glycine-cleavage complex H protein] + CO2. In terms of biological role, the glycine cleavage system catalyzes the degradation of glycine. The P protein binds the alpha-amino group of glycine through its pyridoxal phosphate cofactor; CO(2) is released and the remaining methylamine moiety is then transferred to the lipoamide cofactor of the H protein. This chain is Glycine dehydrogenase (decarboxylating), found in Deinococcus radiodurans (strain ATCC 13939 / DSM 20539 / JCM 16871 / CCUG 27074 / LMG 4051 / NBRC 15346 / NCIMB 9279 / VKM B-1422 / R1).